Here is a 266-residue protein sequence, read N- to C-terminus: Putative carbamate hydrolase RutD (266 aa).

One can recognise an AB hydrolase-1 domain in the interval 15–239 (PVVVLSAGLG…RVEMPWGGHA (225 aa)).

The protein belongs to the AB hydrolase superfamily. Hydrolase RutD family.

It catalyses the reaction carbamate + 2 H(+) = NH4(+) + CO2. Its function is as follows. Involved in pyrimidine catabolism. May facilitate the hydrolysis of carbamate, a reaction that can also occur spontaneously. This Klebsiella variicola (strain At-22) protein is Putative carbamate hydrolase RutD.